The following is a 161-amino-acid chain: Ribonuclease H (161 aa).

An RNase H type-1 domain is found at 3-144 (GLKQISIYTD…CDDLARQAAE (142 aa)). Residues Asp-12, Glu-50, Asp-72, and Asp-136 each coordinate Mg(2+). Residues 133-161 (ERCDDLARQAAEAKPSQEDSGYINQQAQA) are disordered. The segment covering 150 to 161 (EDSGYINQQAQA) has biased composition (polar residues).

The protein belongs to the RNase H family. In terms of assembly, monomer. The cofactor is Mg(2+).

It localises to the cytoplasm. The enzyme catalyses Endonucleolytic cleavage to 5'-phosphomonoester.. Functionally, endonuclease that specifically degrades the RNA of RNA-DNA hybrids. This Shewanella halifaxensis (strain HAW-EB4) protein is Ribonuclease H.